Here is a 325-residue protein sequence, read N- to C-terminus: uncharacterized protein (325 aa).

Residues 1–26 form the signal peptide; that stretch reads MQGRVAGSCAPLGLLLVCLHLPGLFA. Residues 41–60 are compositionally biased toward polar residues; that stretch reads GTNLPQLGQPSSTGPSNSEH. Disordered regions lie at residues 41-110 and 147-189; these read GTNL…MDSW and GSGP…AGGK. The span at 147 to 157 shows a compositional bias: low complexity; it reads GSGPLPGESSP.

In terms of assembly, binds to numerous extracellular matrix proteins. Expressed in skin and tonsils.

Its subcellular location is the secreted. The protein localises to the extracellular space. It is found in the extracellular matrix. This is an uncharacterized protein from Homo sapiens (Human).